A 48-amino-acid chain; its full sequence is Delta-stichotoxin-She1a (48 aa).

Intrachain disulfides connect C3–C43, C5–C33, and C26–C44.

Belongs to the sea anemone sodium channel inhibitory toxin family. Type II subfamily.

The protein resides in the secreted. Its subcellular location is the nematocyst. In terms of biological role, binds specifically to voltage-gated sodium channels (Nav), thereby delaying their inactivation during signal transduction. Is highly toxic to crabs (by intrahemocoelic injection), but without effect upon mice (by intraperitoneal injection). The protein is Delta-stichotoxin-She1a of Stichodactyla helianthus (Sun anemone).